The chain runs to 211 residues: MANCAVLDWQGKEAGKASLNLKVAKDSSAVDLMHRAVLRQQAHSRQGTASTLTRAEVRGGGRKPYKQKGTGRARQGSIRTPLRPGGGIIFGPKPRQYNLSMNRKERRLALRTALMARFNDVIAVKDFGSKLKVPKTKEIQDFLARLDISSNSKVLIILSQPSDIIRRSVRNLEKVKLIAAEHLNVFDLLNANSLIIGEDALGKIKEVYGDD.

Positions 41–53 (QAHSRQGTASTLT) are enriched in polar residues. The tract at residues 41-85 (QAHSRQGTASTLTRAEVRGGGRKPYKQKGTGRARQGSIRTPLRPG) is disordered. The span at 60–71 (GGRKPYKQKGTG) shows a compositional bias: basic residues.

Belongs to the universal ribosomal protein uL4 family. Part of the 50S ribosomal subunit.

Its function is as follows. One of the primary rRNA binding proteins, this protein initially binds near the 5'-end of the 23S rRNA. It is important during the early stages of 50S assembly. It makes multiple contacts with different domains of the 23S rRNA in the assembled 50S subunit and ribosome. In terms of biological role, forms part of the polypeptide exit tunnel. The chain is Large ribosomal subunit protein uL4 from Prochlorococcus marinus (strain SARG / CCMP1375 / SS120).